We begin with the raw amino-acid sequence, 38 residues long: Large ribosomal subunit protein bL36 (38 aa).

The protein belongs to the bacterial ribosomal protein bL36 family.

The chain is Large ribosomal subunit protein bL36 from Buchnera aphidicola subsp. Baizongia pistaciae (strain Bp).